We begin with the raw amino-acid sequence, 922 residues long: GPI inositol-deacylase (922 aa).

Topologically, residues 1–11 (MFLHSVNLWNL) are cytoplasmic. The helical transmembrane segment at 12–32 (AFYVFMVFLATLGLWDVFFGF) threads the bilayer. At 33–597 (EENKCSMSYM…GQVVRFHGGA (565 aa)) the chain is on the lumenal side. Ser-174 is an active-site residue. 3 N-linked (GlcNAc...) asparagine glycosylation sites follow: Asn-363, Asn-402, and Asn-558. Residues 598-618 (LPAYVVSSILLAYGGQLYSLL) traverse the membrane as a helical segment. Topologically, residues 619–641 (STGYCLEYSTILDKEAKPYKVDP) are cytoplasmic. Residues 642–662 (FVIMIKFLLGYKWFKELWDAV) form a helical membrane-spanning segment. At 663 to 668 (LLPELD) the chain is on the lumenal side. A helical membrane pass occupies residues 669–689 (AIVLTSQSMCFPLVSLILFLF). Topologically, residues 690 to 694 (GTCTA) are cytoplasmic. Residues 695 to 715 (YWSGLLSSTSVQLLSSLWLAL) traverse the membrane as a helical segment. Residues 716–733 (KRPAELPKDIKVMSPDLP) are Lumenal-facing. A helical transmembrane segment spans residues 734-754 (VLTVVFLIVSWTTCGALAILL). Residues 755–817 (SYLYYVFKVV…DAEDSLRMHS (63 aa)) lie on the Cytoplasmic side of the membrane. Residues 776-798 (NQPVNPKHSRRSEKKSNHHKDSA) are disordered. The segment covering 782–793 (KHSRRSEKKSNH) has biased composition (basic residues). Residues 818–838 (TVINLLTWVVLLSMPSLIYWL) traverse the membrane as a helical segment. Residues 839-894 (KNLRYYFKLSPDPCKPLAFLLIPAIAILGNTHTVSVKSSKLLKTVSQFPLPLAVGV) are Lumenal-facing. The helical transmembrane segment at 895-915 (IAFGSSHLYRVPCFVIIPLVF) threads the bilayer. The Cytoplasmic segment spans residues 916-922 (HALCNFM).

This sequence belongs to the GPI inositol-deacylase family.

Its subcellular location is the endoplasmic reticulum membrane. Its function is as follows. GPI inositol-deacylase that catalyzes the remove of the acyl chain linked to the 2-OH position of inositol ring from the GPI-anchored protein (GPI-AP) in the endoplasmic reticulum. Initiates the post-attachment remodeling phase of GPI-AP biogenesis and participates in endoplasmic reticulum (ER)-to-Golgi transport of GPI-anchored protein. The protein is GPI inositol-deacylase of Mus musculus (Mouse).